We begin with the raw amino-acid sequence, 456 residues long: PTS system sucrose-specific EIIBC component (456 aa).

One can recognise a PTS EIIB type-1 domain in the interval 4–87; that stretch reads EQISCSLLPL…TQAAGISESS (84 aa). Cys26 functions as the Phosphocysteine intermediate; for EIIB activity in the catalytic mechanism. The PTS EIIC type-1 domain occupies 107 to 456; sequence RLLSNIFVPI…LVLKYKTDAE (350 aa). 10 consecutive transmembrane segments (helical) span residues 112-132, 144-164, 181-201, 213-233, 247-267, 288-308, 329-349, 360-380, 388-408, and 428-448; these read IFVPIIPAIVASGLLMGLLGM, AIYIMLDMCSSAAFIILPILI, TLGGILTHPALTNAWGVAAGF, MIGYQGTVFPVLLAVWFMSIV, LILTPFLTVIISGFIALLIIG, AGWLAGLLFGGLYSVIVITGI, FLLPIWAMANVAQGGACLAVW, ITLPSAFSAMLGITEAAIFGI, FIAALIGGAAGGAWVVSVHVY, and LLNYIIGMVIAFGVAFTVSLV.

The protein resides in the cell inner membrane. It catalyses the reaction N(pros)-phospho-L-histidyl-[protein](out) + sucrose = sucrose 6(G)-phosphate(in) + L-histidyl-[protein]. The phosphoenolpyruvate-dependent sugar phosphotransferase system (sugar PTS), a major carbohydrate active transport system, catalyzes the phosphorylation of incoming sugar substrates concomitantly with their translocation across the cell membrane. This system is involved in sucrose transport. This Salmonella typhimurium protein is PTS system sucrose-specific EIIBC component.